The sequence spans 248 residues: 14-3-3 protein sigma (248 aa).

Phosphoserine occurs at positions 5, 74, and 248.

It belongs to the 14-3-3 family. Homodimer. Interacts with KRT17 and SAMSN1. Found in a complex with XPO7, EIF4A1, ARHGAP1, VPS26A, VPS29 and VPS35. Interacts with GAB2. Interacts with SRPK2. Interacts with COPS6. Interacts with COP1; this interaction leads to proteasomal degradation. Interacts with the 'Thr-369' phosphorylated form of DAPK2. Interacts with PI4KB. Interacts with SLITRK1. Interacts with LRRK2; this interaction is dependent on LRRK2 phosphorylation. Interacts with PKP3 (via N-terminus); the interaction maintains the cytoplasmic pool of PKP3, facilitates PKP3 exchange at desmosomes and restricts PKP3 localization to existing desmosome cell junctions. Interacts with LCP2. Ubiquitinated. Ubiquitination by RFFL induces proteasomal degradation and indirectly regulates p53/TP53 activation. As to expression, present mainly in tissues enriched in stratified squamous keratinizing epithelium.

The protein resides in the cytoplasm. It is found in the nucleus. It localises to the secreted. In terms of biological role, adapter protein implicated in the regulation of a large spectrum of both general and specialized signaling pathways. Binds to a large number of partners, usually by recognition of a phosphoserine or phosphothreonine motif. Binding generally results in the modulation of the activity of the binding partner. Promotes cytosolic retention of GBP1 GTPase by binding to phosphorylated GBP1, thereby inhibiting the innate immune response. Also acts as a TP53/p53-regulated inhibitor of G2/M progression. When bound to KRT17, regulates protein synthesis and epithelial cell growth by stimulating Akt/mTOR pathway. Acts to maintain desmosome cell junction adhesion in epithelial cells via interacting with and sequestering PKP3 to the cytoplasm, thereby restricting its translocation to existing desmosome structures and therefore maintaining desmosome protein homeostasis. Also acts to facilitate PKP3 exchange at desmosome plaques, thereby maintaining keratinocyte intercellular adhesion. May also regulate MDM2 autoubiquitination and degradation and thereby activate p53/TP53. The protein is 14-3-3 protein sigma (SFN) of Homo sapiens (Human).